Reading from the N-terminus, the 47-residue chain is Large ribosomal subunit protein bL34 (47 aa).

Belongs to the bacterial ribosomal protein bL34 family.

This chain is Large ribosomal subunit protein bL34, found in Mycobacterium avium (strain 104).